Here is a 245-residue protein sequence, read N- to C-terminus: Probable phosphatase KPK_3500 (245 aa).

Zn(2+) contacts are provided by His7, His9, His15, His40, Glu73, His101, His131, Asp192, and His194.

It belongs to the PHP family. Homotrimer. The cofactor is Zn(2+).

The sequence is that of Probable phosphatase KPK_3500 from Klebsiella pneumoniae (strain 342).